A 320-amino-acid chain; its full sequence is Uridine phosphorylase 2 (320 aa).

Phosphate-binding positions include glycine 66, arginine 100, and 144 to 147; that span reads RIGT. Cysteine 95 and cysteine 102 are oxidised to a cystine. Uridine-binding positions include 148–149 and 223–225; these read SG and QGR.

The protein belongs to the PNP/UDP phosphorylase family. As to quaternary structure, homodimer. In terms of tissue distribution, liver specific.

It catalyses the reaction uridine + phosphate = alpha-D-ribose 1-phosphate + uracil. The enzyme catalyses 2'-deoxyuridine + phosphate = 2-deoxy-alpha-D-ribose 1-phosphate + uracil. Its pathway is pyrimidine metabolism; UMP biosynthesis via salvage pathway; uracil from uridine (phosphorylase route): step 1/1. With respect to regulation, a conditional disulfide bridge can form within the protein that dislocates a critical phosphate-coordinating arginine Arg-100 away from the active site, disabling the enzyme. In terms of biological role, catalyzes the reversible phosphorylytic cleavage of uridine to uracil and ribose-1-phosphate which can then be utilized as carbon and energy sources or in the rescue of pyrimidine bases for nucleotide synthesis. Shows broad substrate specificity and can also accept deoxyuridine and other analogous compounds. This is Uridine phosphorylase 2 from Mus musculus (Mouse).